The sequence spans 342 residues: Succinylglutamate desuccinylase (342 aa).

Zn(2+) is bound by residues H64, E67, and H159. The active site involves E222.

Belongs to the AspA/AstE family. Succinylglutamate desuccinylase subfamily. Zn(2+) is required as a cofactor.

The catalysed reaction is N-succinyl-L-glutamate + H2O = L-glutamate + succinate. It participates in amino-acid degradation; L-arginine degradation via AST pathway; L-glutamate and succinate from L-arginine: step 5/5. Transforms N(2)-succinylglutamate into succinate and glutamate. The chain is Succinylglutamate desuccinylase from Burkholderia orbicola (strain AU 1054).